The chain runs to 466 residues: tRNA-2-methylthio-N(6)-dimethylallyladenosine synthase (466 aa).

Positions 5 to 125 (RKLHIKSYGC…LPELLARAGR (121 aa)) constitute an MTTase N-terminal domain. [4Fe-4S] cluster-binding residues include C14, C50, C88, C166, C170, and C173. The Radical SAM core domain occupies 152–384 (RARGVSAFVT…QSLIDSQQAA (233 aa)). Positions 387–449 (KAAIGTVVDV…RYSLLGELVA (63 aa)) constitute a TRAM domain.

It belongs to the methylthiotransferase family. MiaB subfamily. In terms of assembly, monomer. The cofactor is [4Fe-4S] cluster.

It localises to the cytoplasm. The enzyme catalyses N(6)-dimethylallyladenosine(37) in tRNA + (sulfur carrier)-SH + AH2 + 2 S-adenosyl-L-methionine = 2-methylsulfanyl-N(6)-dimethylallyladenosine(37) in tRNA + (sulfur carrier)-H + 5'-deoxyadenosine + L-methionine + A + S-adenosyl-L-homocysteine + 2 H(+). Functionally, catalyzes the methylthiolation of N6-(dimethylallyl)adenosine (i(6)A), leading to the formation of 2-methylthio-N6-(dimethylallyl)adenosine (ms(2)i(6)A) at position 37 in tRNAs that read codons beginning with uridine. The sequence is that of tRNA-2-methylthio-N(6)-dimethylallyladenosine synthase from Bradyrhizobium sp. (strain BTAi1 / ATCC BAA-1182).